Consider the following 699-residue polypeptide: MAELMLLSEIADPTRFFTDNLLSPEDWDSTLYSGLDEVAEEQAQLFRCVEQDVPFDSSSLDVGMDVSPPEPPWDPLPIFPDLQVKSEPSSPCSSSSLSSESSHLSTEPPSQVPGVGEVLHVKMESLAPPLCLLGDDPASPFETVQITVGSASDDLSDIQTKLEPASPSSSVHSEASLLSADSPSQPFIGEEVLEVKTESPSPPGCLLWDVPASSLGAVQISMGPSPDSSSGKAPATRKPPLQPKPVVLTTVPVPPRAGPTSAAVLLQPLVQQPAVSPVVLIQGAIRVQPEGPAPAAPRPERKSIVPAPMPGNSCPPEVDAKLLKRQQRMIKNRESACQSRRKKKEYLQGLEARLQAVLADNQQLRRENAALRRRLEALLAENSGLKLGSGNRKVVCIMVFLLFIAFNFGPVSISEPPPAPMSPRMSREEPRPQRHLLGFSEPGPAHGMEPLREAAQSPGEQQPSSAGRPSFRNLTAFPGGAKELLLRDLDQLFLSSDCRHFNRTESLRLADELSGWVQRHQRGRRKIPHRAQERQKSQLRKKSPPVKPVPTQPPGPPERDPVGQLQLYRHPGRSQPEFLDAIDRREDTFYVVSFRRDHLLLPAISHNKTSRPKMSLVMPAMAPNETVSGRGPPGDYEEMMQIECEVMDTRVIHIKTSTVPPSLRKQPSPSPGNTTGGPLPGSAASPAHQASQPLYLNHP.

Alanine 2 is modified (N-acetylalanine). The Cytoplasmic portion of the chain corresponds to 2 to 393 (AELMLLSEIA…GLKLGSGNRK (392 aa)). Disordered stretches follow at residues 59–114 (SLDV…QVPG), 218–246 (VQIS…PKPV), and 290–313 (EGPA…PGNS). A compositionally biased stretch (pro residues) spans 68 to 78 (PPEPPWDPLPI). Residues 86–109 (SEPSSPCSSSSLSSESSHLSTEPP) are compositionally biased toward low complexity. A bZIP domain is found at 322 to 385 (LLKRQQRMIK…EALLAENSGL (64 aa)). Residues 324 to 344 (KRQQRMIKNRESACQSRRKKK) are basic motif. The leucine-zipper stretch occupies residues 347–354 (LQGLEARL). Residues 394-414 (VVCIMVFLLFIAFNFGPVSIS) traverse the membrane as a helical; Signal-anchor for type II membrane protein segment. At 415 to 699 (EPPPAPMSPR…ASQPLYLNHP (285 aa)) the chain is on the lumenal side. The tract at residues 417-474 (PPAPMSPRMSREEPRPQRHLLGFSEPGPAHGMEPLREAAQSPGEQQPSSAGRPSFRNL) is disordered. Residues 458 to 467 (PGEQQPSSAG) show a composition bias toward polar residues. N-linked (GlcNAc...) asparagine glycans are attached at residues asparagine 473 and asparagine 502. Residues 519–529 (RHQRGRRKIPH) are compositionally biased toward basic residues. The interval 519–563 (RHQRGRRKIPHRAQERQKSQLRKKSPPVKPVPTQPPGPPERDPVG) is disordered. The span at 545-556 (PVKPVPTQPPGP) shows a compositional bias: pro residues. N-linked (GlcNAc...) asparagine glycosylation is found at asparagine 607, asparagine 624, and asparagine 673. The tract at residues 657 to 699 (STVPPSLRKQPSPSPGNTTGGPLPGSAASPAHQASQPLYLNHP) is disordered. Residues 680-693 (PGSAASPAHQASQP) show a composition bias toward low complexity.

It belongs to the bZIP family. ATF subfamily. As to quaternary structure, homodimer and heterodimer with ATF6-alpha. The dimer interacts with the nuclear transcription factor Y (NF-Y) trimer through direct binding to NF-Y subunit C (NF-YC). Post-translationally, N-glycosylated. In terms of processing, during unfolded protein response, a fragment of approximately 60 kDa containing the cytoplasmic transcription factor domain is released by proteolysis. The cleavage is probably performed sequentially by site-1 (MBTPS1, S1P) and site-2 (MBTPS2, S2P) proteases.

Its subcellular location is the endoplasmic reticulum membrane. The protein localises to the nucleus. Functionally, precursor of the transcription factor form (Processed cyclic AMP-dependent transcription factor ATF-6 beta), which is embedded in the endoplasmic reticulum membrane. Endoplasmic reticulum stress promotes processing of this form, releasing the transcription factor form that translocates into the nucleus, where it activates transcription of genes involved in the unfolded protein response (UPR). Its function is as follows. Transcription factor that acts in the unfolded protein response (UPR) pathway by activating UPR target genes induced during ER stress. Binds DNA on the 5'-CCAC[GA]-3' half of the ER stress response element (ERSE) (5'-CCAATN(9)CCAC[GA]-3') when NF-Y is bound to ERSE. This chain is Cyclic AMP-dependent transcription factor ATF-6 beta (Atf6b), found in Mus musculus (Mouse).